The chain runs to 321 residues: Hydrolase 3 (321 aa).

The Involved in the stabilization of the negatively charged intermediate by the formation of the oxyanion hole motif lies at 80-82; it reads HGA. Catalysis depends on residues S172 and D267.

The protein belongs to the 'GDXG' lipolytic enzyme family.

The catalysed reaction is dihydroprecondylocarpine acetate + NADPH = (+)-vincadifformine + acetate + NADP(+). It participates in alkaloid biosynthesis. Functionally, component of the seco-iridoid and derivatives monoterpenoid indole alkaloids (MIAs, e.g. vincadifformine) biosynthesis pathway. Catalyzes the conversion of O-acetylstemmadenine (OAS) to vincadifformine. May also trigger the formation of additional unknown MIAs. The protein is Hydrolase 3 of Catharanthus roseus (Madagascar periwinkle).